The chain runs to 706 residues: Elongation factor G (706 aa).

A tr-type G domain is found at 15–291 (LKTRNIGISA…GVLDYLASPV (277 aa)). Residues 24–31 (AHIDSGKT), 91–95 (DTPGH), and 145–148 (NKLD) contribute to the GTP site.

This sequence belongs to the TRAFAC class translation factor GTPase superfamily. Classic translation factor GTPase family. EF-G/EF-2 subfamily.

The protein resides in the cytoplasm. Its function is as follows. Catalyzes the GTP-dependent ribosomal translocation step during translation elongation. During this step, the ribosome changes from the pre-translocational (PRE) to the post-translocational (POST) state as the newly formed A-site-bound peptidyl-tRNA and P-site-bound deacylated tRNA move to the P and E sites, respectively. Catalyzes the coordinated movement of the two tRNA molecules, the mRNA and conformational changes in the ribosome. This chain is Elongation factor G, found in Leptospira borgpetersenii serovar Hardjo-bovis (strain L550).